Consider the following 282-residue polypeptide: Nucleotide-binding protein XCV3122 (282 aa).

5-12 serves as a coordination point for ATP; that stretch reads GLSGSGKS. 57–60 contributes to the GTP binding site; sequence DVRS.

The protein belongs to the RapZ-like family.

In terms of biological role, displays ATPase and GTPase activities. This chain is Nucleotide-binding protein XCV3122, found in Xanthomonas euvesicatoria pv. vesicatoria (strain 85-10) (Xanthomonas campestris pv. vesicatoria).